The primary structure comprises 291 residues: Taste receptor type 2 member 16 (291 aa).

A topological domain (extracellular) is located at residue Met-1. The chain crosses the membrane as a helical span at residues 2 to 22 (IPIQLTVFFMIIYVLESLTII). At 23–41 (VQSSLIVAVLGREWLQVRR) the chain is on the cytoplasmic side. A helical transmembrane segment spans residues 42–62 (LMPVDMILISLGISRFCLQWA). Topologically, residues 63–84 (SMLNBFCSYFNLNYVLCNLTIT) are extracellular. The N-linked (GlcNAc...) asparagine glycan is linked to Asn-80. Residues 85–105 (WEFFNILTFWLNSLLTVFYCI) form a helical membrane-spanning segment. The Cytoplasmic portion of the chain corresponds to 106 to 125 (KVSSFTHHIFLWLRWRILRL). The chain crosses the membrane as a helical span at residues 126–146 (FPWILLGSLMITCVTIIPSAI). Residues 147–182 (GNYIQIQLLTMEHLPRNSTVTDKLEKFHQYEFQAHT) lie on the Extracellular side of the membrane. Asn-163 is a glycosylation site (N-linked (GlcNAc...) asparagine). The chain crosses the membrane as a helical span at residues 183–203 (VALVIPFILFLASTILLMASL). Residues 204–228 (TKQIQHHSTGHCNPSMKAHFTALRS) lie on the Cytoplasmic side of the membrane. Residues 229–249 (LAVLFIVFTSYFLTILITIIG) traverse the membrane as a helical segment. The Extracellular portion of the chain corresponds to 250 to 257 (TLFDRRCW). A helical membrane pass occupies residues 258-278 (LWVWEAFVYAFILMHSTSLML). Residues 279 to 291 (SSPTLKRILKGKC) are Cytoplasmic-facing.

It belongs to the G-protein coupled receptor T2R family. Interacts with RTP3 and RTP4.

It is found in the cell membrane. In terms of biological role, receptor that may play a role in the perception of bitterness and is gustducin-linked. May play a role in sensing the chemical composition of the gastrointestinal content. The activity of this receptor may stimulate alpha gustducin, mediate PLC-beta-2 activation and lead to the gating of TRPM5. The protein is Taste receptor type 2 member 16 (TAS2R16) of Gorilla gorilla gorilla (Western lowland gorilla).